Here is a 285-residue protein sequence, read N- to C-terminus: Polyamine aminopropyltransferase (285 aa).

A PABS domain is found at Asp-5–Lys-241. S-methyl-5'-thioadenosine is bound at residue Gln-35. Residues His-66 and Asp-90 each coordinate spermidine. Residues Asp-110 and Asp-141–Gly-142 each bind S-methyl-5'-thioadenosine. Asp-160 (proton acceptor) is an active-site residue. Asp-160–Asp-163 contacts spermidine. An S-methyl-5'-thioadenosine-binding site is contributed by Pro-167.

This sequence belongs to the spermidine/spermine synthase family. In terms of assembly, homodimer or homotetramer.

The protein localises to the cytoplasm. The enzyme catalyses S-adenosyl 3-(methylsulfanyl)propylamine + putrescine = S-methyl-5'-thioadenosine + spermidine + H(+). It functions in the pathway amine and polyamine biosynthesis; spermidine biosynthesis; spermidine from putrescine: step 1/1. Its function is as follows. Catalyzes the irreversible transfer of a propylamine group from the amino donor S-adenosylmethioninamine (decarboxy-AdoMet) to putrescine (1,4-diaminobutane) to yield spermidine. The protein is Polyamine aminopropyltransferase of Xanthomonas axonopodis pv. citri (strain 306).